The primary structure comprises 104 residues: L-rhamnose mutarotase (104 aa).

Residue Tyr-18 coordinates substrate. Catalysis depends on His-22, which acts as the Proton donor. Residues Tyr-41 and 76–77 (WW) each bind substrate.

This sequence belongs to the rhamnose mutarotase family. As to quaternary structure, homodimer.

The protein resides in the cytoplasm. It carries out the reaction alpha-L-rhamnose = beta-L-rhamnose. The protein operates within carbohydrate metabolism; L-rhamnose metabolism. Involved in the anomeric conversion of L-rhamnose. The polypeptide is L-rhamnose mutarotase (Tolumonas auensis (strain DSM 9187 / NBRC 110442 / TA 4)).